Consider the following 230-residue polypeptide: MQDVLLQVQAVSKSYHDGDVTTQVLSDVDLQVFKGEQLAIVGTSGSGKSTLLHIMGTLDKPSSGKVLLAGEDLYQVSSARQAQIRNQDLGFIYQFHHLLPEFTALENVAMPAFIQGRDRTLAQADAKVLLERVGLGHRMSHIPAELSGGERQRVAIARALINKPKLVLADEPTGNLDAKSGEAVYELIRELANQLGTAFVVVTHDPKLAARMDRQLTMKNGYLQVPESAQ.

An ABC transporter domain is found at 6–230 (LQVQAVSKSY…GYLQVPESAQ (225 aa)). 42-49 (GTSGSGKS) is an ATP binding site.

Belongs to the ABC transporter superfamily. Lipoprotein translocase (TC 3.A.1.125) family. As to quaternary structure, the complex is composed of two ATP-binding proteins (LolD) and two transmembrane proteins (LolC and LolE).

It is found in the cell inner membrane. In terms of biological role, part of the ABC transporter complex LolCDE involved in the translocation of mature outer membrane-directed lipoproteins, from the inner membrane to the periplasmic chaperone, LolA. Responsible for the formation of the LolA-lipoprotein complex in an ATP-dependent manner. The protein is Lipoprotein-releasing system ATP-binding protein LolD of Shewanella oneidensis (strain ATCC 700550 / JCM 31522 / CIP 106686 / LMG 19005 / NCIMB 14063 / MR-1).